The following is a 530-amino-acid chain: Ubiquitin carboxyl-terminal hydrolase 17-like protein 1 (530 aa).

The USP domain occupies 80-375; the sequence is AGLQNMGNTC…QAYVLFYIQK (296 aa). The active-site Nucleophile is the Cys-89. His-334 acts as the Proton acceptor in catalysis. Basic and acidic residues-rich tracts occupy residues 382–392 and 398–411; these read SESVSRGREPR and DTDR…LKRD. Residues 382–411 form a disordered region; it reads SESVSRGREPRALGAEDTDRRAKQGELKRD.

The protein belongs to the peptidase C19 family. USP17 subfamily.

It localises to the nucleus. Its subcellular location is the endoplasmic reticulum. It carries out the reaction Thiol-dependent hydrolysis of ester, thioester, amide, peptide and isopeptide bonds formed by the C-terminal Gly of ubiquitin (a 76-residue protein attached to proteins as an intracellular targeting signal).. Its function is as follows. Deubiquitinating enzyme that removes conjugated ubiquitin from specific proteins to regulate different cellular processes that may include cell proliferation, progression through the cell cycle, apoptosis, cell migration, and the cellular response to viral infection. This chain is Ubiquitin carboxyl-terminal hydrolase 17-like protein 1 (USP17L1), found in Homo sapiens (Human).